The following is a 314-amino-acid chain: 4-hydroxy-3-methylbut-2-enyl diphosphate reductase (314 aa).

Residue cysteine 12 coordinates [4Fe-4S] cluster. Histidine 41 and histidine 74 together coordinate (2E)-4-hydroxy-3-methylbut-2-enyl diphosphate. The dimethylallyl diphosphate site is built by histidine 41 and histidine 74. Histidine 41 and histidine 74 together coordinate isopentenyl diphosphate. Cysteine 96 provides a ligand contact to [4Fe-4S] cluster. Histidine 124 is a (2E)-4-hydroxy-3-methylbut-2-enyl diphosphate binding site. A dimethylallyl diphosphate-binding site is contributed by histidine 124. Residue histidine 124 participates in isopentenyl diphosphate binding. The Proton donor role is filled by glutamate 126. Threonine 167 is a (2E)-4-hydroxy-3-methylbut-2-enyl diphosphate binding site. Cysteine 197 contributes to the [4Fe-4S] cluster binding site. The (2E)-4-hydroxy-3-methylbut-2-enyl diphosphate site is built by serine 225, serine 226, asparagine 227, and serine 269. Serine 225, serine 226, asparagine 227, and serine 269 together coordinate dimethylallyl diphosphate. Isopentenyl diphosphate contacts are provided by serine 225, serine 226, asparagine 227, and serine 269.

The protein belongs to the IspH family. Requires [4Fe-4S] cluster as cofactor.

The catalysed reaction is isopentenyl diphosphate + 2 oxidized [2Fe-2S]-[ferredoxin] + H2O = (2E)-4-hydroxy-3-methylbut-2-enyl diphosphate + 2 reduced [2Fe-2S]-[ferredoxin] + 2 H(+). The enzyme catalyses dimethylallyl diphosphate + 2 oxidized [2Fe-2S]-[ferredoxin] + H2O = (2E)-4-hydroxy-3-methylbut-2-enyl diphosphate + 2 reduced [2Fe-2S]-[ferredoxin] + 2 H(+). It participates in isoprenoid biosynthesis; dimethylallyl diphosphate biosynthesis; dimethylallyl diphosphate from (2E)-4-hydroxy-3-methylbutenyl diphosphate: step 1/1. The protein operates within isoprenoid biosynthesis; isopentenyl diphosphate biosynthesis via DXP pathway; isopentenyl diphosphate from 1-deoxy-D-xylulose 5-phosphate: step 6/6. Catalyzes the conversion of 1-hydroxy-2-methyl-2-(E)-butenyl 4-diphosphate (HMBPP) into a mixture of isopentenyl diphosphate (IPP) and dimethylallyl diphosphate (DMAPP). Acts in the terminal step of the DOXP/MEP pathway for isoprenoid precursor biosynthesis. The chain is 4-hydroxy-3-methylbut-2-enyl diphosphate reductase from Actinobacillus succinogenes (strain ATCC 55618 / DSM 22257 / CCUG 43843 / 130Z).